Reading from the N-terminus, the 266-residue chain is Interleukin-1 beta (266 aa).

Positions 1–113 are excised as a propeptide; the sequence is MATVPEPINE…ETSSDELLCD (113 aa).

The protein belongs to the IL-1 family. Monomer. In its precursor form, weakly interacts with full-length MEFV; the mature cytokine does not interact at all. Interacts with integrins ITGAV:ITGBV and ITGA5:ITGB1; integrin-binding is required for IL1B signaling. Interacts with cargo receptor TMED10; the interaction is direct and is required for the secretion of IL1B mature form. Interacts with HSP90AB1; the interaction facilitates cargo translocation into the ERGIC. Interacts with HSP90B1; the interaction facilitates cargo translocation into the ERGIC.

The protein localises to the cytoplasm. The protein resides in the cytosol. Its subcellular location is the secreted. It is found in the lysosome. It localises to the extracellular exosome. Potent pro-inflammatory cytokine. Initially discovered as the major endogenous pyrogen, induces prostaglandin synthesis, neutrophil influx and activation, T-cell activation and cytokine production, B-cell activation and antibody production, and fibroblast proliferation and collagen production. Promotes Th17 differentiation of T-cells. Synergizes with IL12/interleukin-12 to induce IFNG synthesis from T-helper 1 (Th1) cells. Plays a role in angiogenesis by inducing VEGF production synergistically with TNF and IL6. Involved in transduction of inflammation downstream of pyroptosis: its mature form is specifically released in the extracellular milieu by passing through the gasdermin-D (GSDMD) pore. This is Interleukin-1 beta (IL1B) from Capra hircus (Goat).